The following is a 451-amino-acid chain: Proline--tRNA ligase (451 aa).

The protein belongs to the class-II aminoacyl-tRNA synthetase family. ProS type 2 subfamily. As to quaternary structure, homodimer.

It localises to the cytoplasm. It catalyses the reaction tRNA(Pro) + L-proline + ATP = L-prolyl-tRNA(Pro) + AMP + diphosphate. In terms of biological role, catalyzes the attachment of proline to tRNA(Pro) in a two-step reaction: proline is first activated by ATP to form Pro-AMP and then transferred to the acceptor end of tRNA(Pro). This Roseobacter denitrificans (strain ATCC 33942 / OCh 114) (Erythrobacter sp. (strain OCh 114)) protein is Proline--tRNA ligase.